Here is a 213-residue protein sequence, read N- to C-terminus: MKNWKTSAESILTTGPVVPVIVVKKLEHAVPMAKALVAGGVRVLEVTLRTECAVDAIRAIAKEVPEAIVGAGTVLNPQQLAEVTEAGAQFAISPGLTEPLLKAATEGTIPLIPGISTVSELMLGMDYGLKEFKFFPAEANGGVKALQAIAGPFSQVRFCPTGGISPANYRDYLALKSVLCIGGSWLVPADALEAGDYDRITKLAREAVEGAKL.

Catalysis depends on E45, which acts as the Proton acceptor. Pyruvate-binding residues include R49, T73, and K133. K133 serves as the catalytic Schiff-base intermediate with substrate.

The protein belongs to the KHG/KDPG aldolase family. Homotrimer.

Its subcellular location is the cytoplasm. The catalysed reaction is 2-dehydro-3-deoxy-6-phospho-D-gluconate = D-glyceraldehyde 3-phosphate + pyruvate. It carries out the reaction (4S)-4-hydroxy-2-oxoglutarate = glyoxylate + pyruvate. It participates in carbohydrate acid metabolism; 2-dehydro-3-deoxy-D-gluconate degradation; D-glyceraldehyde 3-phosphate and pyruvate from 2-dehydro-3-deoxy-D-gluconate: step 2/2. The protein operates within carbohydrate metabolism; glyoxylate and dicarboxylate metabolism. Its function is as follows. Involved in the degradation of glucose via the Entner-Doudoroff pathway. Catalyzes the reversible, stereospecific retro-aldol cleavage of 2-keto-3-deoxy-6-phosphogluconate (KDPG) to pyruvate and D-glyceraldehyde-3-phosphate. In addition to its KDPG aldolase activity, catalyzes the reversible cleavage of 2-keto-4-hydroxyglutarate (KHG) to glyoxylate and pyruvate. The enzyme is stereoselective for the S-enantiomer of KHG. Cleavage of KHG could serve in tricarboxylic acid (TCA) cycle regulation or, when operating in the reverse direction, in the detoxification of glyoxylate. In Escherichia coli O157:H7, this protein is KHG/KDPG aldolase (eda).